The following is a 651-amino-acid chain: Acetyl-coenzyme A synthetase (651 aa).

CoA is bound by residues 189 to 192 (RGGK), Thr311, and Asn335. ATP is bound by residues 387–389 (GEP), 411–416 (DTWWQT), Asp500, and Arg515. Ser523 lines the CoA pocket. Arg526 serves as a coordination point for ATP. Mg(2+) is bound by residues Val537, His539, and Val542. Position 586 (Arg586) interacts with CoA. N6-acetyllysine is present on Lys611.

It belongs to the ATP-dependent AMP-binding enzyme family. Mg(2+) is required as a cofactor. Acetylated. Deacetylation by the SIR2-homolog deacetylase activates the enzyme.

It carries out the reaction acetate + ATP + CoA = acetyl-CoA + AMP + diphosphate. Functionally, catalyzes the conversion of acetate into acetyl-CoA (AcCoA), an essential intermediate at the junction of anabolic and catabolic pathways. AcsA undergoes a two-step reaction. In the first half reaction, AcsA combines acetate with ATP to form acetyl-adenylate (AcAMP) intermediate. In the second half reaction, it can then transfer the acetyl group from AcAMP to the sulfhydryl group of CoA, forming the product AcCoA. This is Acetyl-coenzyme A synthetase from Brucella suis (strain ATCC 23445 / NCTC 10510).